The sequence spans 524 residues: Serine/threonine-protein kinase PAK 2 (524 aa).

Positions 1–81 are disordered; it reads MSDNGELEDK…PEISPPSDFE (81 aa). An N-acetylserine modification is found at S2. Residues S2, S20, S55, S58, and S59 each carry the phosphoserine modification. Position 60 is a phosphothreonine (T60). At K62 the chain carries N6-acetyllysine. S64 bears the Phosphoserine mark. Over residues 67–81 the composition is skewed to basic and acidic residues; sequence KEKERPEISPPSDFE. The tract at residues 69–112 is GTPase-binding; that stretch reads KERPEISPPSDFEHTIHVGFDAVTGEFTGMPEQWARLLQTSNIT. The interval 69 to 137 is autoregulatory region; that stretch reads KERPEISPPS…KFYDSNTVKQ (69 aa). The region spanning 74-87 is the CRIB domain; it reads ISPPSDFEHTIHVG. Residues 88-248 are linker; the sequence is FDAVTGEFTG…IVSIGDPKKK (161 aa). Residue K128 is modified to N6-acetyllysine. T134 carries the post-translational modification Phosphothreonine. Position 139 is a phosphotyrosine (Y139). At S141 the chain carries Phosphoserine. Positions 142 to 190 are disordered; the sequence is FTPPEKDGFPSGTPALNTKGSETSAVVTEEDDDDEDAAPPVIAPRPDHT. At T143 the chain carries Phosphothreonine. The residue at position 152 (S152) is a Phosphoserine. Phosphothreonine is present on residues T154, T159, and T169. Polar residues predominate over residues 155 to 167; the sequence is PALNTKGSETSAV. Positions 169–178 are enriched in acidic residues; sequence TEEDDDDEDA. Residue S197 is modified to Phosphoserine. A disordered region spans residues 204 to 228; it reads APVGDSNVDSGAKSSDKQKKKAKMT. The short motif at 245-251 is the Nuclear localization signal element; that stretch reads PKKKYTR. The 252-residue stretch at 249-500 folds into the Protein kinase domain; that stretch reads YTRYEKIGQG…AKELLQHPFL (252 aa). Residues 255 to 263 and K278 contribute to the ATP site; that span reads IGQGASGTV. D368 acts as the Proton acceptor in catalysis. A Phosphothreonine; by autocatalysis modification is found at T402.

The protein belongs to the protein kinase superfamily. STE Ser/Thr protein kinase family. STE20 subfamily. As to quaternary structure, interacts tightly with GTP-bound but not GDP-bound CDC42/p21 and RAC1. Interacts with SH3MD4. Interacts with SCRIB. Interacts with ARHGEF7 and GIT1. PAK-2p34 interacts with ARHGAP10. Interacts with RAC1. Post-translationally, full-length PAK2 is autophosphorylated when activated by CDC42/p21. Following cleavage, both peptides, PAK-2p27 and PAK-2p34, become highly autophosphorylated. Autophosphorylation of PAK-2p27 can occur in the absence of any effectors and is dependent on phosphorylation of Thr-402, because PAK-2p27 is acting as an exogenous substrate. In terms of processing, during apoptosis proteolytically cleaved by caspase-3 or caspase-3-like proteases to yield active PAK-2p34. Ubiquitinated, leading to its proteasomal degradation.

Its subcellular location is the cytoplasm. It localises to the nucleus. It is found in the perinuclear region. The protein resides in the membrane. The enzyme catalyses L-seryl-[protein] + ATP = O-phospho-L-seryl-[protein] + ADP + H(+). The catalysed reaction is L-threonyl-[protein] + ATP = O-phospho-L-threonyl-[protein] + ADP + H(+). With respect to regulation, activated by binding small G proteins. Binding of GTP-bound CDC42 or RAC1 to the autoregulatory region releases monomers from the autoinhibited dimer, enables phosphorylation of Thr-402 and allows the kinase domain to adopt an active structure. Following caspase cleavage, autophosphorylated PAK-2p34 is constitutively active. In terms of biological role, serine/threonine protein kinase that plays a role in a variety of different signaling pathways including cytoskeleton regulation, cell motility, cell cycle progression, apoptosis or proliferation. Acts as a downstream effector of the small GTPases CDC42 and RAC1. Activation by the binding of active CDC42 and RAC1 results in a conformational change and a subsequent autophosphorylation on several serine and/or threonine residues. Full-length PAK2 stimulates cell survival and cell growth. Phosphorylates MAPK4 and MAPK6 and activates the downstream target MAPKAPK5, a regulator of F-actin polymerization and cell migration. Phosphorylates JUN and plays an important role in EGF-induced cell proliferation. Phosphorylates many other substrates including histone H4 to promote assembly of H3.3 and H4 into nucleosomes, BAD, ribosomal protein S6, or MBP. Phosphorylates CASP7, thereby preventing its activity. Additionally, associates with ARHGEF7 and GIT1 to perform kinase-independent functions such as spindle orientation control during mitosis. On the other hand, apoptotic stimuli such as DNA damage lead to caspase-mediated cleavage of PAK2, generating PAK-2p34, an active p34 fragment that translocates to the nucleus and promotes cellular apoptosis involving the JNK signaling pathway. Caspase-activated PAK2 phosphorylates MKNK1 and reduces cellular translation. This is Serine/threonine-protein kinase PAK 2 (Pak2) from Rattus norvegicus (Rat).